We begin with the raw amino-acid sequence, 1356 residues long: Serine/threonine-protein kinase PSK1 (1356 aa).

Ser10 bears the Phosphoserine mark. The disordered stretch occupies residues 20 to 115; it reads KHAITHKGTS…SVDSTVSSPL (96 aa). Composition is skewed to polar residues over residues 26–37 and 54–64; these read KGTSSSVASLQT and YDTSLSDVSTP. Residues 99-115 are compositionally biased toward low complexity; the sequence is LPSTASSSVDSTVSSPL. A phosphoserine mark is found at Ser192, Ser202, Ser255, Ser286, and Ser327. Residues 450–518 form the PAS 1 domain; that stretch reads RTFTSTKNSA…VLHKLLSTEG (69 aa). Positions 592–608 are enriched in low complexity; sequence PTLSSSSTLSLPKMASS. 2 disordered regions span residues 592-612 and 627-660; these read PTLS…PTGS and YTKP…PVRS. In terms of domain architecture, PAS 2 spans 738-807; it reads LKLKIHSLPY…FINDKYPALD (70 aa). At Ser926 the chain carries Phosphoserine. The interval 948–972 is disordered; sequence DSRAHSQSTLSEQEQVPLENDKDSG. The segment covering 952 to 961 has biased composition (polar residues); sequence HSQSTLSEQE. Ser1018, Ser1023, Ser1035, and Ser1055 each carry phosphoserine. Residues 1021–1032 are compositionally biased toward polar residues; the sequence is TESLADSKSSGK. Residues 1021-1066 form a disordered region; it reads TESLADSKSSGKGLSPLEEEKLIDENATENGLAGSPKDEDGIIMTN. At Thr1079 the chain carries Phosphothreonine. In terms of domain architecture, Protein kinase spans 1096-1354; the sequence is FVSLQKMGEG…IDDINNDKWL (259 aa). Residues 1102–1110 and Lys1125 each bind ATP; that span reads MGEGAYGKV. Asp1230 acts as the Proton acceptor in catalysis.

This sequence belongs to the protein kinase superfamily. Ser/Thr protein kinase family.

It localises to the cytoplasm. It catalyses the reaction L-seryl-[protein] + ATP = O-phospho-L-seryl-[protein] + ADP + H(+). The catalysed reaction is L-threonyl-[protein] + ATP = O-phospho-L-threonyl-[protein] + ADP + H(+). Serine/threonine-protein kinase involved in the control of sugar metabolism and translation. Phosphorylates UGP1, which is required for normal glycogen and beta-(1,6)-glucan synthesis. This phosphorylation shifts glucose partitioning toward cell wall glucan synthesis at the expense of glycogen synthesis. The chain is Serine/threonine-protein kinase PSK1 (PSK1) from Saccharomyces cerevisiae (strain ATCC 204508 / S288c) (Baker's yeast).